Reading from the N-terminus, the 595-residue chain is Isoprene synthase, chloroplastic (595 aa).

The transit peptide at 1 to 37 directs the protein to the chloroplast; it reads MATELLCLHRPISLTHKLFRNPLPKVIQATPLTLKLR. Residue aspartate 345 coordinates dimethylallyl diphosphate. The Mg(2+) site is built by aspartate 345 and aspartate 349. The short motif at 345–349 is the DDXXD motif element; it reads DDIYD. Residues glutamate 423, arginine 486, and asparagine 489 each coordinate dimethylallyl diphosphate. The Mg(2+) site is built by asparagine 489, serine 493, and glutamate 497.

This sequence belongs to the terpene synthase family. Tpsb subfamily. It depends on Mg(2+) as a cofactor. Requires Mn(2+) as cofactor.

It localises to the plastid. The protein resides in the chloroplast. The enzyme catalyses dimethylallyl diphosphate = isoprene + diphosphate. Its function is as follows. Lyase that catalyzes the formation of isoprene from dimethylallyl diphosphate. The polypeptide is Isoprene synthase, chloroplastic (ISPS) (Populus tremuloides (Quaking aspen)).